The following is a 162-amino-acid chain: Endoribonuclease YbeY (162 aa).

His117, His121, and His127 together coordinate Zn(2+).

The protein belongs to the endoribonuclease YbeY family. Zn(2+) serves as cofactor.

The protein resides in the cytoplasm. Its function is as follows. Single strand-specific metallo-endoribonuclease involved in late-stage 70S ribosome quality control and in maturation of the 3' terminus of the 16S rRNA. The chain is Endoribonuclease YbeY from Francisella tularensis subsp. mediasiatica (strain FSC147).